A 285-amino-acid polypeptide reads, in one-letter code: HTH-type transcriptional regulator MurR (285 aa).

Residues 1–77 (MLYLTKIRNA…MALIGEYSAS (77 aa)) form the HTH rpiR-type domain. Residues 37–56 (SRKMAKLLGISQSSIVKFAQ) constitute a DNA-binding region (H-T-H motif). In terms of domain architecture, SIS spans 128–268 (IIEAISKAPF…FVGLVQLNDV (141 aa)).

As to quaternary structure, homotetramer.

It functions in the pathway amino-sugar metabolism; N-acetylmuramate degradation [regulation]. Its function is as follows. Represses the expression of the murPQ operon involved in the uptake and degradation of N-acetylmuramic acid (MurNAc). Binds to two adjacent inverted repeats within the operator region. MurNAc 6-phosphate, the substrate of MurQ, is the specific inducer that weakens binding of MurR to the operator. The protein is HTH-type transcriptional regulator MurR of Escherichia coli O17:K52:H18 (strain UMN026 / ExPEC).